Here is a 203-residue protein sequence, read N- to C-terminus: ADP-ribosylation factor-like protein 6-interacting protein 1 (203 aa).

At M1–R41 the chain is on the cytoplasmic side. A helical transmembrane segment spans residues A42 to L62. The Lumenal portion of the chain corresponds to D63 to S65. The chain crosses the membrane as a helical span at residues V66 to I86. The Cytoplasmic portion of the chain corresponds to L87–K133. A helical transmembrane segment spans residues P134–N175. The Lumenal portion of the chain corresponds to Q176–E203.

It belongs to the ARL6ip family. Homooligomer. Heterodimer with ARL6IP5. Interacts with ARL6. Interacts with TMEM33. Interacts with ATL1. In terms of tissue distribution, expressed in the cerebral cortex, cerebellum, hippocampus, olfactory bulbs, medulla oblongate and limbic system (at protein level). Ubiquitous. Expressed in all hematopoietic cell lineages, with highest levels in early myeloid progenitor cells.

The protein localises to the endomembrane system. It is found in the endoplasmic reticulum membrane. Its subcellular location is the endoplasmic reticulum. In terms of biological role, positively regulates SLC1A1/EAAC1-mediated glutamate transport by increasing its affinity for glutamate in a PKC activity-dependent manner. Promotes the catalytic efficiency of SLC1A1/EAAC1 probably by reducing its interaction with ARL6IP5, a negative regulator of SLC1A1/EAAC1-mediated glutamate transport. Plays a role in the formation and stabilization of endoplasmic reticulum tubules. Negatively regulates apoptosis, possibly by modulating the activity of caspase-9 (CASP9). Inhibits cleavage of CASP9-dependent substrates and downstream markers of apoptosis but not CASP9 itself. May be involved in protein transport, membrane trafficking, or cell signaling during hematopoietic maturation. The protein is ADP-ribosylation factor-like protein 6-interacting protein 1 (Arl6ip1) of Mus musculus (Mouse).